We begin with the raw amino-acid sequence, 696 residues long: Iron-sulfur clusters transporter ATM1, mitochondrial (696 aa).

The transit peptide at 1 to 67 (MIKWGLFGAV…RFFSSSHKLG (67 aa)) directs the protein to the mitochondrion. The Mitochondrial matrix segment spans residues 68 to 109 (VNTKEDSSTYLFGRKISTSESKMLKSLLVTIWPKNKPSFKLR). Residues 110–131 (VIFALSLLIASKLLNVEVPFFF) traverse the membrane as a helical segment. In terms of domain architecture, ABC transmembrane type-1 spans 110–400 (VIFALSLLIA…LGSVYRELKQ (291 aa)). Residues 132–154 (KKIIDEMNVDWNDQLGTVGTVIG) are Mitochondrial intermembrane-facing. Residues 155-178 (TLIIAYGGARFGAVLFGELRNAVF) form a helical membrane-spanning segment. At 179-227 (ASVAQTAIKRVAHNTFVHLLNMDLNFHLSRQTGGLTRAIDRGTKGISYV) the chain is on the mitochondrial matrix side. A helical membrane pass occupies residues 228–251 (LNAMVFHIIPISFEISMVCGILIY). Residue asparagine 252 is a topological domain, mitochondrial intermembrane. A helical transmembrane segment spans residues 253–273 (YGLSFAAVTLATMLSYSVFTI). At 274-339 (KTTAWRTGFR…ASVKVATSLA (66 aa)) the chain is on the mitochondrial matrix side. Glutathione contacts are provided by residues 279–283 (RTGFR) and 342–345 (NAGQ). Residues 340–358 (YLNAGQNFIFTSALTAMMY) form a helical membrane-spanning segment. Over 359 to 373 (MGCNGVATGSLTVGD) the chain is Mitochondrial intermembrane. A helical membrane pass occupies residues 374–395 (LVLINQLVFQLSVPLSFLGSVY). Position 392 (glycine 392) interacts with glutathione. The Mitochondrial matrix portion of the chain corresponds to 396-696 (RELKQSLLDM…EYAKETEEQK (301 aa)). Positions 438–674 (IKFENVTFGY…PNSLYSQLWN (237 aa)) constitute an ABC transporter domain. ATP is bound by residues tyrosine 447 and 471 to 482 (GPSGSGKSTILR).

It belongs to the ABC transporter superfamily. ABCB family. Heavy Metal importer (TC 3.A.1.210) subfamily. As to quaternary structure, homodimer.

The protein localises to the mitochondrion inner membrane. Performs an essential function in the generation of cytoplasmic iron-sulfur proteins by mediating the ATP-dependent export of Fe/S cluster precursors synthesized by NFS1 and other mitochondrial proteins. Hydrolyzes ATP. Binds glutathione and may function by transporting a glutathione-conjugated iron-sulfur compound. The protein is Iron-sulfur clusters transporter ATM1, mitochondrial of Debaryomyces hansenii (strain ATCC 36239 / CBS 767 / BCRC 21394 / JCM 1990 / NBRC 0083 / IGC 2968) (Yeast).